A 449-amino-acid chain; its full sequence is Chromosomal replication initiator protein DnaA (449 aa).

Residues 1–71 are domain I, interacts with DnaA modulators; it reads MPSSLWKHCL…LLSHYSSGRI (71 aa). Positions 71–112 are domain II; the sequence is IEKALLEVGSCSLQPQPHIQAVELTSKSARSSSRVVDRIPES. The domain III, AAA+ region stretch occupies residues 113-329; sequence RLNKNYTFDS…GALRRVIAYS (217 aa). 4 residues coordinate ATP: Gly157, Gly159, Lys160, and Thr161. The interval 330–449 is domain IV, binds dsDNA; it reads RFTHRPITME…YHNLLKKLST (120 aa).

This sequence belongs to the DnaA family. Oligomerizes as a right-handed, spiral filament on DNA at oriC.

The protein resides in the cytoplasm. In terms of biological role, plays an essential role in the initiation and regulation of chromosomal replication. ATP-DnaA binds to the origin of replication (oriC) to initiate formation of the DNA replication initiation complex once per cell cycle. Binds the DnaA box (a 9 base pair repeat at the origin) and separates the double-stranded (ds)DNA. Forms a right-handed helical filament on oriC DNA; dsDNA binds to the exterior of the filament while single-stranded (ss)DNA is stabiized in the filament's interior. The ATP-DnaA-oriC complex binds and stabilizes one strand of the AT-rich DNA unwinding element (DUE), permitting loading of DNA polymerase. After initiation quickly degrades to an ADP-DnaA complex that is not apt for DNA replication. Binds acidic phospholipids. This chain is Chromosomal replication initiator protein DnaA, found in Nitrosococcus oceani (strain ATCC 19707 / BCRC 17464 / JCM 30415 / NCIMB 11848 / C-107).